A 264-amino-acid chain; its full sequence is 4-hydroxy-tetrahydrodipicolinate reductase (264 aa).

Residue 8-13 coordinates NAD(+); that stretch reads GPRGNM. Lys-36 provides a ligand contact to NADP(+). NAD(+) contacts are provided by residues 97–99 and 123–126; these read GTT and APNF. His-153 serves as the catalytic Proton donor/acceptor. His-154 lines the (S)-2,3,4,5-tetrahydrodipicolinate pocket. Lys-157 (proton donor) is an active-site residue. A (S)-2,3,4,5-tetrahydrodipicolinate-binding site is contributed by 163–164; that stretch reads GT.

This sequence belongs to the DapB family.

It is found in the cytoplasm. It carries out the reaction (S)-2,3,4,5-tetrahydrodipicolinate + NAD(+) + H2O = (2S,4S)-4-hydroxy-2,3,4,5-tetrahydrodipicolinate + NADH + H(+). The enzyme catalyses (S)-2,3,4,5-tetrahydrodipicolinate + NADP(+) + H2O = (2S,4S)-4-hydroxy-2,3,4,5-tetrahydrodipicolinate + NADPH + H(+). The protein operates within amino-acid biosynthesis; L-lysine biosynthesis via DAP pathway; (S)-tetrahydrodipicolinate from L-aspartate: step 4/4. Its function is as follows. Catalyzes the conversion of 4-hydroxy-tetrahydrodipicolinate (HTPA) to tetrahydrodipicolinate. The chain is 4-hydroxy-tetrahydrodipicolinate reductase from Shouchella clausii (strain KSM-K16) (Alkalihalobacillus clausii).